A 127-amino-acid polypeptide reads, in one-letter code: Glycine cleavage system H protein (127 aa).

The Lipoyl-binding domain maps to 22–104; sequence EVVIGITHFA…YEGAWMVKVE (83 aa). At lysine 63 the chain carries N6-lipoyllysine.

It belongs to the GcvH family. The glycine cleavage system is composed of four proteins: P, T, L and H. (R)-lipoate serves as cofactor.

Functionally, the glycine cleavage system catalyzes the degradation of glycine. The H protein shuttles the methylamine group of glycine from the P protein to the T protein. In terms of biological role, is also involved in protein lipoylation via its role as an octanoyl/lipoyl carrier protein intermediate. The chain is Glycine cleavage system H protein from Bacillus cereus (strain G9842).